We begin with the raw amino-acid sequence, 748 residues long: Serine/threonine-protein kinase CG17528 (748 aa).

2 stretches are compositionally biased toward polar residues: residues 22 to 35 (QASP…SVPS) and 47 to 59 (EKTN…QEDN). 2 disordered regions span residues 22–41 (QASP…NVVT) and 47–81 (EKTN…ELDD). Residues serine 67, serine 70, serine 73, serine 87, serine 88, and serine 89 each carry the phosphoserine modification. Threonine 91 bears the Phosphothreonine mark. Serine 93 bears the Phosphoserine mark. Threonine 100 bears the Phosphothreonine mark. Doublecortin domains lie at 158-244 (LRIK…VEYN) and 313-396 (RIVT…AEDF). The region spanning 477–735 (YSLGRIIGDG…SEDILDHSWT (259 aa)) is the Protein kinase domain. ATP-binding positions include 483–491 (IGDGNFAIV) and lysine 506. Catalysis depends on aspartate 598, which acts as the Proton acceptor.

The protein belongs to the protein kinase superfamily. CAMK Ser/Thr protein kinase family. CaMK subfamily.

It catalyses the reaction L-seryl-[protein] + ATP = O-phospho-L-seryl-[protein] + ADP + H(+). The catalysed reaction is L-threonyl-[protein] + ATP = O-phospho-L-threonyl-[protein] + ADP + H(+). This Drosophila melanogaster (Fruit fly) protein is Serine/threonine-protein kinase CG17528.